Reading from the N-terminus, the 83-residue chain is RNA-binding protein Hfq (83 aa).

Positions 10-70 constitute a Sm domain; sequence DAFLNQVRKE…ISTVSPLKPV (61 aa).

Belongs to the Hfq family. In terms of assembly, homohexamer.

Functionally, RNA chaperone that binds small regulatory RNA (sRNAs) and mRNAs to facilitate mRNA translational regulation in response to envelope stress, environmental stress and changes in metabolite concentrations. Also binds with high specificity to tRNAs. This chain is RNA-binding protein Hfq, found in Pelotomaculum thermopropionicum (strain DSM 13744 / JCM 10971 / SI).